A 480-amino-acid polypeptide reads, in one-letter code: MNDVAIVKEGWLHKRGEYIKTWRPRYFLLKNDGTFIGYKERPQDVDQRESPLNNFSVAQCQLMKTERPRPNTFIIRCLQWTTVIERTFHVETPEEREEWATAIQTVADGLKRQEEETMDFRSGSPSDNSGAEEMEVSLAKPKHRVTMNEFEYLKLLGKGTFGKVILVKEKATGRYYAMKILKKEVIVAKDEVAHTLTENRVLQNSRHPFLTALKYSFQTHDRLCFVMEYANGGELFFHLSRERVFSEDRARFYGAEIVSALDYLHSEKNVVYRDLKLENLMLDKDGHIKITDFGLCKEGIKDGATMKTFCGTPEYLAPEVLEDNDYGRAVDWWGLGVVMYEMMCGRLPFYNQDHEKLFELILMEEIRFPRTLGPEAKSLLSGLLKKDPTQRLGGGSEDAKEIMQHRFFANIVWQDVYEKKLSPPFKPQVTSETDTRYFDEEFTAQMITITPPDQDDSMECVDSERRPHFPQFSYSASGTA.

Positions 5 to 108 constitute a PH domain; sequence AIVKEGWLHK…WATAIQTVAD (104 aa). K14 and K20 each carry N6-acetyllysine. Residue 14–19 coordinates 1D-myo-inositol 1,3,4,5-tetrakisphosphate; that stretch reads KRGEYI. Residues 23–25 and N53 contribute to the 1D-myo-inositol 1,3,4,5-tetrakisphosphate site; that span reads RPR. A disulfide bond links C60 and C77. Residue R86 participates in 1D-myo-inositol 1,3,4,5-tetrakisphosphate binding. Residues 114–137 are disordered; it reads EEETMDFRSGSPSDNSGAEEMEVS. Position 124 is a phosphoserine (S124). Phosphoserine; alternate is present on residues S126 and S129. O-linked (GlcNAc) serine; alternate glycans are attached at residues S126 and S129. Residues 150 to 408 form the Protein kinase domain; it reads FEYLKLLGKG…AKEIMQHRFF (259 aa). Residue 156 to 164 coordinates ATP; the sequence is LGKGTFGKV. Residue Y176 is modified to Phosphotyrosine; by TNK2. ATP is bound at residue K179. D274 (proton acceptor) is an active-site residue. Residue K284 forms a Glycyl lysine isopeptide (Lys-Gly) (interchain with G-Cter in ubiquitin) linkage. A disulfide bridge connects residues C296 and C310. T305 carries an O-linked (GlcNAc) threonine glycan. T308 carries the post-translational modification Phosphothreonine; by IKKE, PDPK1 and TBK1. O-linked (GlcNAc) threonine glycosylation occurs at T312. Residues 409-480 enclose the AGC-kinase C-terminal domain; that stretch reads ANIVWQDVYE…QFSYSASGTA (72 aa). T448 is subject to Phosphothreonine. T450 carries the post-translational modification Phosphothreonine; by MTOR. The segment at 450-480 is disordered; the sequence is TPPDQDDSMECVDSERRPHFPQFSYSASGTA. An O-linked (GlcNAc) serine; alternate glycan is attached at S473. S473 is modified (phosphoserine; by IKKE, MTOR, PRKDC and TBK1; alternate). A Phosphotyrosine modification is found at Y474. The residue at position 477 (S477) is a Phosphoserine; by CDK2 and MTOR. T479 carries the phosphothreonine; by CDK2 and MTOR modification.

Belongs to the protein kinase superfamily. AGC Ser/Thr protein kinase family. RAC subfamily. As to quaternary structure, interacts with and phosphorylated by PDPK1. Interacts with AGAP2 (isoform 2/PIKE-A); the interaction occurs in the presence of guanine nucleotides. Interacts with AKTIP. Interacts (via PH domain) with MTCP1, TCL1A and TCL1B. Interacts with CDKN1B; the interaction phosphorylates CDKN1B promoting 14-3-3 binding and cell-cycle progression. Interacts with MAP3K5 and TRAF6. Interacts with BAD, PPP2R5B, STK3 and STK4. Interacts (via PH domain) with SIRT1. Interacts with SRPK2 in a phosphorylation-dependent manner. Interacts with TRIM13; the interaction ubiquitinates AKT1 leading to its proteasomal degradation. Interacts with RAF1. Interacts (via the C-terminus) with CCDC88A (via its C-terminus) and THEM4 (via its C-terminus). Interacts with GRB10; the interaction leads to GRB10 phosphorylation thus promoting YWHAE-binding. Interacts with KCTD20. Interacts with BTBD10. Interacts with PA2G4. Interacts with KIF14; the interaction is detected in the plasma membrane upon INS stimulation and promotes AKT1 phosphorylation. Interacts with FAM83B; activates the PI3K/AKT signaling cascade. Interacts with WDFY2 (via WD repeats 1-3). Forms a complex with WDFY2 and FOXO1. Interacts with FAM168A. Interacts with SYAP1 (via phosphorylated form and BSD domain); this interaction is enhanced in a mTORC2-mediated manner in response to epidermal growth factor (EGF) stimulation and activates AKT1. Interacts with PKHM3. Interacts with FKBP5/FKBP51; promoting interaction between Akt/AKT1 and PHLPP1, thereby enhancing dephosphorylation and subsequent activation of Akt/AKT1. Interacts with TMEM175; leading to formation of the lysoK(GF) complex. In terms of processing, O-GlcNAcylation at Thr-305 and Thr-312 inhibits activating phosphorylation at Thr-308 via disrupting the interaction between AKT1 and PDPK1. O-GlcNAcylation at Ser-473 also probably interferes with phosphorylation at this site. Post-translationally, phosphorylation on Thr-308, Ser-473 and Tyr-474 is required for full activity. Phosphorylation of the activation loop at Thr-308 by PDPK1/PDK1 is a prerequisite for full activation. Phosphorylation by mTORC2 in response to growth factors plays a key role in AKT1 activation: mTORC2 phosphorylates different sites depending on the context, such as Thr-450, Ser-473, Ser-477 or Thr-479, thereby facilitating subsequent phosphorylation of the activation loop by PDPK1/PDK1. Phosphorylation at Ser-473 by mTORC2 promotes ubiquitination and degradation by the proteasome. Also phosphorylated at Ser-477 and Thr-479 by CDK2, facilitating subsequent phosphorylation of the activation loop by PDPK1/PDK1. Activated TNK2 phosphorylates it on Tyr-176 resulting in its binding to the anionic plasma membrane phospholipid PA. This phosphorylated form localizes to the cell membrane, where it is targeted by PDPK1 and PDPK2 for further phosphorylations on Thr-308 and Ser-473 leading to its activation. Phosphorylated at Thr-308 and Ser-473 by IKBKE and TBK1. Ser-473 phosphorylation is enhanced by interaction with AGAP2 isoform 2 (PIKE-A). Ser-473 phosphorylation is enhanced by signaling through activated FLT3. Ser-473 is dephosphorylated by PHLPP. Dephosphorylated at Thr-308 and Ser-473 by PP2A phosphatase. The phosphorylated form of PPP2R5B is required for bridging AKT1 with PP2A phosphatase. Ser-473 is dephosphorylated by CPPED1, leading to termination of signaling. AIM2 acts as an inhibitor of AKT1 by inhibiting phosphorylation Ser-473: AIM2 acts both by inhibiting the activity of PRKDC/DNA-PK kinase and promoting dephosphorylation by PP2A phosphatase. Ubiquitinated; undergoes both 'Lys-48'- and 'Lys-63'-linked polyubiquitination. TRAF6-induced 'Lys-63'-linked AKT1 ubiquitination is critical for phosphorylation and activation. When ubiquitinated, it translocates to the plasma membrane, where it becomes phosphorylated. When fully phosphorylated and translocated into the nucleus, undergoes 'Lys-48'-polyubiquitination catalyzed by TTC3, leading to its degradation by the proteasome. Also ubiquitinated by TRIM13 leading to its proteasomal degradation. Ubiquitinated via 'Lys-48'-linked polyubiquitination by ZNRF1, leading to its degradation by the proteasome. Phosphorylated, undergoes 'Lys-48'-linked polyubiquitination preferentially at Lys-284 catalyzed by MUL1, leading to its proteasomal degradation. In terms of processing, acetylated on Lys-14 and Lys-20 by the histone acetyltransferases EP300 and KAT2B. Acetylation results in reduced phosphorylation and inhibition of activity. Deacetylated at Lys-14 and Lys-20 by SIRT1. SIRT1-mediated deacetylation relieves the inhibition. Post-translationally, cleavage by caspase-3/CASP3. Cleaved at the caspase-3 consensus site Asp-462 during apoptosis, resulting in down-regulation of the AKT signaling pathway and decreased cell survival. As to expression, widely expressed. Low levels found in liver with slightly higher levels present in thymus and testis.

The protein resides in the cytoplasm. It is found in the nucleus. It localises to the cell membrane. Its subcellular location is the mitochondrion intermembrane space. It carries out the reaction L-seryl-[protein] + ATP = O-phospho-L-seryl-[protein] + ADP + H(+). The catalysed reaction is L-threonyl-[protein] + ATP = O-phospho-L-threonyl-[protein] + ADP + H(+). With respect to regulation, three specific sites, one in the kinase domain (Thr-308) and the two other ones in the C-terminal regulatory region (Ser-473 and Tyr-474), need to be phosphorylated for its full activation. Its function is as follows. AKT1 is one of 3 closely related serine/threonine-protein kinases (AKT1, AKT2 and AKT3) called the AKT kinase, and which regulate many processes including metabolism, proliferation, cell survival, growth and angiogenesis. This is mediated through serine and/or threonine phosphorylation of a range of downstream substrates. Over 100 substrate candidates have been reported so far, but for most of them, no isoform specificity has been reported. AKT is responsible of the regulation of glucose uptake by mediating insulin-induced translocation of the SLC2A4/GLUT4 glucose transporter to the cell surface. Phosphorylation of PTPN1 at 'Ser-50' negatively modulates its phosphatase activity preventing dephosphorylation of the insulin receptor and the attenuation of insulin signaling. Phosphorylation of TBC1D4 triggers the binding of this effector to inhibitory 14-3-3 proteins, which is required for insulin-stimulated glucose transport. AKT also regulates the storage of glucose in the form of glycogen by phosphorylating GSK3A at 'Ser-21' and GSK3B at 'Ser-9', resulting in inhibition of its kinase activity. Phosphorylation of GSK3 isoforms by AKT is also thought to be one mechanism by which cell proliferation is driven. AKT also regulates cell survival via the phosphorylation of MAP3K5 (apoptosis signal-related kinase). Phosphorylation of 'Ser-83' decreases MAP3K5 kinase activity stimulated by oxidative stress and thereby prevents apoptosis. AKT mediates insulin-stimulated protein synthesis by phosphorylating TSC2 at 'Ser-939' and 'Thr-1462', thereby activating the mTORC1 signaling pathway, and leading to both phosphorylation of 4E-BP1 and in activation of RPS6KB1. Also regulates the mTORC1 signaling pathway by catalyzing phosphorylation of CASTOR1 and DEPDC5. AKT plays a role as key modulator of the AKT-mTOR signaling pathway controlling the tempo of the process of newborn neurons integration during adult neurogenesis, including correct neuron positioning, dendritic development and synapse formation. Part of a positive feedback loop of mTORC2 signaling by mediating phosphorylation of MAPKAP1/SIN1, promoting mTORC2 activation. AKT is involved in the phosphorylation of members of the FOXO factors (Forkhead family of transcription factors), leading to binding of 14-3-3 proteins and cytoplasmic localization. In particular, FOXO1 is phosphorylated at 'Thr-24', 'Ser-256' and 'Ser-319'. FOXO3 and FOXO4 are phosphorylated on equivalent sites. AKT has an important role in the regulation of NF-kappa-B-dependent gene transcription and positively regulates the activity of CREB1 (cyclic AMP (cAMP)-response element binding protein). The phosphorylation of CREB1 induces the binding of accessory proteins that are necessary for the transcription of pro-survival genes such as BCL2 and MCL1. AKT phosphorylates 'Ser-454' on ATP citrate lyase (ACLY), thereby potentially regulating ACLY activity and fatty acid synthesis. Activates the 3B isoform of cyclic nucleotide phosphodiesterase (PDE3B) via phosphorylation of 'Ser-273', resulting in reduced cyclic AMP levels and inhibition of lipolysis. Phosphorylates PIKFYVE on 'Ser-318', which results in increased PI(3)P-5 activity. The Rho GTPase-activating protein DLC1 is another substrate and its phosphorylation is implicated in the regulation cell proliferation and cell growth. Signals downstream of phosphatidylinositol 3-kinase (PI(3)K) to mediate the effects of various growth factors such as platelet-derived growth factor (PDGF), epidermal growth factor (EGF), insulin and insulin-like growth factor 1 (IGF1). AKT mediates the antiapoptotic effects of IGF1. Essential for the SPATA13-mediated regulation of cell migration and adhesion assembly and disassembly. May be involved in the regulation of the placental development. Phosphorylates STK4/MST1 at 'Thr-120' and 'Thr-387' leading to inhibition of its: kinase activity, nuclear translocation, autophosphorylation and ability to phosphorylate FOXO3. Phosphorylates STK3/MST2 at 'Thr-117' and 'Thr-384' leading to inhibition of its: cleavage, kinase activity, autophosphorylation at Thr-180, binding to RASSF1 and nuclear translocation. Phosphorylates SRPK2 and enhances its kinase activity towards SRSF2 and ACIN1 and promotes its nuclear translocation. Phosphorylates RAF1 at 'Ser-259' and negatively regulates its activity. Phosphorylation of BAD stimulates its pro-apoptotic activity. Phosphorylates KAT6A at 'Thr-369' and this phosphorylation inhibits the interaction of KAT6A with PML and negatively regulates its acetylation activity towards p53/TP53. Phosphorylates palladin (PALLD), modulating cytoskeletal organization and cell motility. Phosphorylates prohibitin (PHB), playing an important role in cell metabolism and proliferation. Phosphorylates CDKN1A, for which phosphorylation at 'Thr-145' induces its release from CDK2 and cytoplasmic relocalization. These recent findings indicate that the AKT1 isoform has a more specific role in cell motility and proliferation. Phosphorylates CLK2 thereby controlling cell survival to ionizing radiation. Phosphorylates PCK1 at 'Ser-90', reducing the binding affinity of PCK1 to oxaloacetate and changing PCK1 into an atypical protein kinase activity using GTP as donor. Also acts as an activator of TMEM175 potassium channel activity in response to growth factors: forms the lysoK(GF) complex together with TMEM175 and acts by promoting TMEM175 channel activation, independently of its protein kinase activity. Acts as a negative regulator of the cGAS-STING pathway by mediating phosphorylation of CGAS during mitosis, leading to its inhibition. Acts as a regulator of mitochondrial calcium uptake by mediating phosphorylation of MICU1 in the mitochondrial intermembrane space, impairing MICU1 maturation. Acts as an inhibitor of tRNA methylation by mediating phosphorylation of the N-terminus of METTL1, thereby inhibiting METTL1 methyltransferase activity. In response to LPAR1 receptor pathway activation, phosphorylates Rabin8/RAB3IP which alters its activity and phosphorylates WDR44 which induces WDR44 binding to Rab11, thereby switching Rab11 vesicular function from preciliary trafficking to endocytic recycling. In Mus musculus (Mouse), this protein is RAC-alpha serine/threonine-protein kinase (Akt1).